Here is a 479-residue protein sequence, read N- to C-terminus: Odorant receptor coreceptor (479 aa).

At 1–43 the chain is on the cytoplasmic side; sequence MMKMKQQGLVADLLPNIRVMKFFGHFVFNYYDDNSSKYLHKIF. The helical transmembrane segment at 44–64 threads the bilayer; the sequence is CCVNLFLLLLQFALCAVNLII. The Extracellular segment spans residues 65-73; that stretch reads ESADVDDLT. Residues 74 to 94 traverse the membrane as a helical segment; that stretch reads ANTITLLFFTHSIVKIIYFAV. The Cytoplasmic portion of the chain corresponds to 95–133; the sequence is RSKYFYRTWAIWNNPNSHPLFAESNARYHAIALKKMRLL. A helical transmembrane segment spans residues 134–154; that stretch reads LFLVGATTVLSAIAWTVLTFF. At 155 to 190 the chain is on the extracellular side; it reads EHPIRKLVDPVTNETTIIELPQLLLRSYYPFDASKG. An N-linked (GlcNAc...) asparagine glycan is attached at Asn-167. The chain crosses the membrane as a helical span at residues 191-211; the sequence is IMHVIVLIYQFYWVLFMLIDA. The Cytoplasmic portion of the chain corresponds to 212-350; sequence NSLDVLFCSW…IVRLVTAVGD (139 aa). Positions 261 to 280 are disordered; that stretch reads SAEHLRESENQPPPPVPPQG. A helical membrane pass occupies residues 351–371; the sequence is AYGFALLLHMLTTTITLTLLA. Residues 372–383 are Extracellular-facing; it reads YQATKVNGVNVY. A helical transmembrane segment spans residues 384–404; sequence AASTIGYIIYTFGQVFLFCIF. Residues 405–455 lie on the Cytoplasmic side of the membrane; sequence GNRLIEESTSVMEAAYSCHWYDGSEEAKTFVQIVCQQCQKAMSISGAKFFT. The helical transmembrane segment at 456–476 threads the bilayer; the sequence is VSLDLFASVLGAVVTYFMVLV. The Extracellular portion of the chain corresponds to 477 to 479; it reads QLK.

Belongs to the insect chemoreceptor superfamily. Heteromeric odorant receptor channel (TC 1.A.69) family. Orco subfamily. As to quaternary structure, heterodimer with conventional odorant receptors (ORs).

It is found in the cell membrane. Functionally, odorant coreceptor which complexes with conventional odorant receptors (ORs) to form odorant-sensing units, providing sensitive and prolonged odorant signaling and calcium permeability. Obligate coreceptor of all odorant receptors. Orco is a universal and integral part of the functional odorant receptor, involved in the dendritic localization of other olfactory receptors. Can form functional ion channels in the absence of an odor-binding odorant receptor. Plays a central role in the perception of olfactory stimuli in ants and is essential for ant social organization. Required for pheromone sensing and mating behavior. Also required for the development and maintenance of odorant receptor neurons (ORNs) and of antennal lobe glomeruli. This Harpegnathos saltator (Jerdon's jumping ant) protein is Odorant receptor coreceptor.